The chain runs to 263 residues: Cell division protein DivIB (263 aa).

Residues 1–32 (MNPGQDREKIVNIEERIPKIKEQRKQKANRRL) lie on the Cytoplasmic side of the membrane. A helical transmembrane segment spans residues 33–53 (ISFIMLFFIMVLIIVYLQTPI). The alpha stretch occupies residues 51 to 123 (TPISKVSTIS…NKINIAIEEY (73 aa)). One can recognise a POTRA domain in the interval 54 to 123 (SKVSTISVTG…NKINIAIEEY (70 aa)). The Extracellular segment spans residues 54–263 (SKVSTISVTG…DKAAKKEDEN (210 aa)). The tract at residues 124-251 (KAIAYLEKDD…EVATYFEEFG (128 aa)) is beta. The segment at 229 to 263 (SQLSSNKKGIIHLEVATYFEEFGKNDKAAKKEDEN) is gamma.

It belongs to the FtsQ/DivIB family. DivIB subfamily. As to quaternary structure, interacts with FtsL, DivIC and PBP-2B.

It is found in the cell membrane. In terms of biological role, cell division protein that may be involved in stabilizing or promoting the assembly of the division complex. Plays an essential role in division at high temperatures, maybe by protecting FtsL from degradation or by promoting formation of the FtsL-DivIC complex. May modulate the transpeptidase activity of PBP-2B. Also required for efficient sporulation at all temperatures. Could be directly involved in the engulfment process or be required to form a sporulation septum competent for engulfment. Influences the Spo0J/Soj system of chromosome segregation. In Bacillus subtilis (strain 168), this protein is Cell division protein DivIB.